Reading from the N-terminus, the 94-residue chain is MRAAIAVLFIALVGLATYHLVMSQANPELRTVDIEGKKLILRGFENPAVKVKGCGEEALLHGSIVEIPLNCSKVKVEVYSEGRLVFSSSLSLNP.

An N-terminal signal peptide occupies residues 1–25 (MRAAIAVLFIALVGLATYHLVMSQA).

This is an uncharacterized protein from Archaeoglobus fulgidus (strain ATCC 49558 / DSM 4304 / JCM 9628 / NBRC 100126 / VC-16).